A 399-amino-acid chain; its full sequence is MDTHAFKRSLHHSERYNRRGFGRAEEVAENLEQAYQSGLIGTIRDNGYKLTHGRLNVHLAEAFGFCWGVERAVAMAYETRRHYPSERLWITNEIIHNPSVNDHLREMDVLFIPVEEGVKDFSGVTSGDVVILPAFGATVQEMQLLNERGCHIVDTTCPWVSKVWNTVEKHKKHTFTSVIHGKVKHEETLATSSFAGTYLVVLDLEEAQIVVDYILGKGDREAFMQRFAKACSEGFDPDRDLERLGVANQTTMLKSETEEIGRMFERTMLSKYGPADLNEHFLAYNTICDATQERQDAMFSLVDEPLDLLVVIGGFNSSNTTHLQEIAVSRGIRSFHIDTPDRIDETTNSIEHKPLSEDLKRDQVFLPAGPVTVGITSGASTPDRAVEAVIEKLMRLSEN.

A [4Fe-4S] cluster-binding site is contributed by Cys-66. His-96 serves as a coordination point for (2E)-4-hydroxy-3-methylbut-2-enyl diphosphate. His-96 provides a ligand contact to dimethylallyl diphosphate. An isopentenyl diphosphate-binding site is contributed by His-96. Cys-157 contacts [4Fe-4S] cluster. His-185 contacts (2E)-4-hydroxy-3-methylbut-2-enyl diphosphate. His-185 serves as a coordination point for dimethylallyl diphosphate. His-185 contacts isopentenyl diphosphate. Catalysis depends on Glu-187, which acts as the Proton donor. Thr-250 contributes to the (2E)-4-hydroxy-3-methylbut-2-enyl diphosphate binding site. Cys-288 serves as a coordination point for [4Fe-4S] cluster. Positions 317, 318, 319, and 380 each coordinate (2E)-4-hydroxy-3-methylbut-2-enyl diphosphate. 4 residues coordinate dimethylallyl diphosphate: Ser-317, Ser-318, Asn-319, and Ser-380. Isopentenyl diphosphate-binding residues include Ser-317, Ser-318, Asn-319, and Ser-380.

Belongs to the IspH family. The cofactor is [4Fe-4S] cluster.

The catalysed reaction is isopentenyl diphosphate + 2 oxidized [2Fe-2S]-[ferredoxin] + H2O = (2E)-4-hydroxy-3-methylbut-2-enyl diphosphate + 2 reduced [2Fe-2S]-[ferredoxin] + 2 H(+). The enzyme catalyses dimethylallyl diphosphate + 2 oxidized [2Fe-2S]-[ferredoxin] + H2O = (2E)-4-hydroxy-3-methylbut-2-enyl diphosphate + 2 reduced [2Fe-2S]-[ferredoxin] + 2 H(+). It functions in the pathway isoprenoid biosynthesis; dimethylallyl diphosphate biosynthesis; dimethylallyl diphosphate from (2E)-4-hydroxy-3-methylbutenyl diphosphate: step 1/1. Its pathway is isoprenoid biosynthesis; isopentenyl diphosphate biosynthesis via DXP pathway; isopentenyl diphosphate from 1-deoxy-D-xylulose 5-phosphate: step 6/6. In terms of biological role, catalyzes the conversion of 1-hydroxy-2-methyl-2-(E)-butenyl 4-diphosphate (HMBPP) into a mixture of isopentenyl diphosphate (IPP) and dimethylallyl diphosphate (DMAPP). Acts in the terminal step of the DOXP/MEP pathway for isoprenoid precursor biosynthesis. The chain is 4-hydroxy-3-methylbut-2-enyl diphosphate reductase from Synechococcus sp. (strain CC9902).